The following is a 375-amino-acid chain: Putative fimbrium tip subunit Fim1C (375 aa).

A signal peptide spans 1–16 (MKLLANIFLSGLAILA). A lipid anchor (N-palmitoyl cysteine) is attached at Cys-17. A lipid anchor (S-diacylglycerol cysteine) is attached at Cys-17. The propeptide occupies 17–47 (CVSCSKDEDPVLPLEGAKLSVAVKASGTATK).

This sequence belongs to the bacteroidetes fimbrillin superfamily. FimA/Mfa1 family. As to quaternary structure, may be part of the fimbrial tip.

The protein localises to the fimbrium. Its subcellular location is the cell outer membrane. Functionally, probably a component of the fimbrium tip. Fimbriae are filamentous appendages on the cell surface that mediate cell adhesion and biofilm formation. In Parabacteroides distasonis (strain ATCC 8503 / DSM 20701 / CIP 104284 / JCM 5825 / NCTC 11152), this protein is Putative fimbrium tip subunit Fim1C.